The sequence spans 421 residues: Glutamyl-tRNA reductase (421 aa).

Substrate is bound by residues 49–52 (TCNR), Ser-109, 114–116 (EPQ), and Gln-120. Residue Cys-50 is the Nucleophile of the active site. An NADP(+)-binding site is contributed by 189 to 194 (GAGKMS).

Belongs to the glutamyl-tRNA reductase family. As to quaternary structure, homodimer.

It carries out the reaction (S)-4-amino-5-oxopentanoate + tRNA(Glu) + NADP(+) = L-glutamyl-tRNA(Glu) + NADPH + H(+). It functions in the pathway porphyrin-containing compound metabolism; protoporphyrin-IX biosynthesis; 5-aminolevulinate from L-glutamyl-tRNA(Glu): step 1/2. Its function is as follows. Catalyzes the NADPH-dependent reduction of glutamyl-tRNA(Glu) to glutamate 1-semialdehyde (GSA). The protein is Glutamyl-tRNA reductase of Solibacter usitatus (strain Ellin6076).